The following is a 141-amino-acid chain: MVKRFFESYHEVPDGTQCHRKTYITTALGGICGIIGSAYRVSLNPADSTLEAVARVGRYTFTAAAIGAMFGLTTCVSAQVREKPDDPLNYFIGGCAGGLTLGARTHSYGTAAMGCVYMGTAAALFKIGKLEGWELFPTPKV.

The next 2 helical transmembrane spans lie at 21–43 and 58–80; these read KTYI…RVSL and RYTF…SAQV.

The protein belongs to the complex I NDUFA11 subunit family. Complex I is composed of 45 different subunits.

Its subcellular location is the mitochondrion inner membrane. Accessory subunit of the mitochondrial membrane respiratory chain NADH dehydrogenase (Complex I), that is believed not to be involved in catalysis. Complex I functions in the transfer of electrons from NADH to the respiratory chain. The immediate electron acceptor for the enzyme is believed to be ubiquinone. The polypeptide is NADH dehydrogenase [ubiquinone] 1 alpha subcomplex subunit 11 (Ndufa11) (Mus musculus (Mouse)).